The primary structure comprises 215 residues: Pyridoxine/pyridoxamine 5'-phosphate oxidase (215 aa).

Residues 9–12 and lysine 69 contribute to the substrate site; that span reads RRDY. FMN contacts are provided by residues 64 to 69, 79 to 80, lysine 86, and glutamine 108; these read RILLLK and FT. 3 residues coordinate substrate: tyrosine 126, arginine 130, and serine 134. Residues 143 to 144 and tryptophan 188 contribute to the FMN site; that span reads QS. Substrate is bound at residue 194–196; that stretch reads RLH. Arginine 198 lines the FMN pocket.

The protein belongs to the pyridoxamine 5'-phosphate oxidase family. In terms of assembly, homodimer. It depends on FMN as a cofactor.

The enzyme catalyses pyridoxamine 5'-phosphate + O2 + H2O = pyridoxal 5'-phosphate + H2O2 + NH4(+). It carries out the reaction pyridoxine 5'-phosphate + O2 = pyridoxal 5'-phosphate + H2O2. The protein operates within cofactor metabolism; pyridoxal 5'-phosphate salvage; pyridoxal 5'-phosphate from pyridoxamine 5'-phosphate: step 1/1. It participates in cofactor metabolism; pyridoxal 5'-phosphate salvage; pyridoxal 5'-phosphate from pyridoxine 5'-phosphate: step 1/1. Functionally, catalyzes the oxidation of either pyridoxine 5'-phosphate (PNP) or pyridoxamine 5'-phosphate (PMP) into pyridoxal 5'-phosphate (PLP). The polypeptide is Pyridoxine/pyridoxamine 5'-phosphate oxidase (Pseudomonas fluorescens (strain ATCC BAA-477 / NRRL B-23932 / Pf-5)).